Consider the following 336-residue polypeptide: C2H2 finger domain transcription factor mtfA (336 aa).

The interval 1-245 (MDVASLISPS…PSPGHQQMIS (245 aa)) is disordered. Composition is skewed to polar residues over residues 7 to 29 (ISPS…SSAS) and 36 to 56 (EQST…YSRT). Low complexity predominate over residues 136 to 149 (SPSTSSVSAASSSA). Residues 168–181 (TDRSSISSQGSVQH) show a composition bias toward polar residues. A compositionally biased stretch (low complexity) spans 182 to 210 (AASAPYASPAPSVSSFSSPIEPSTPSTAA). Residues 216–245 (PAPNTFQNPSPFPQTSTASLPSPGHQQMIS) are compositionally biased toward polar residues. 2 consecutive C2H2-type zinc fingers follow at residues 272 to 294 (YICR…SHSH) and 300 to 325 (FRCT…RGCH).

It localises to the nucleus. Its function is as follows. Transcription factor that controls morphogenesis and virulence. Acts as a positive regulator of gliotixin and protease production. In Aspergillus fumigatus (strain CBS 144.89 / FGSC A1163 / CEA10) (Neosartorya fumigata), this protein is C2H2 finger domain transcription factor mtfA.